Consider the following 114-residue polypeptide: Hydrogenase maturation factor HypA (114 aa).

His-2 provides a ligand contact to Ni(2+). Zn(2+)-binding residues include Cys-73, Cys-76, Cys-89, and Cys-92.

The protein belongs to the HypA/HybF family.

Involved in the maturation of [NiFe] hydrogenases. Required for nickel insertion into the metal center of the hydrogenase. The protein is Hydrogenase maturation factor HypA of Azoarcus sp. (strain BH72).